Consider the following 462-residue polypeptide: DEK domain-containing chromatin-associated protein 1 (462 aa).

Disordered stretches follow at residues 18–91 and 212–390; these read AVTE…TQGR and KETK…RKEL. Basic and acidic residues predominate over residues 20–32; that stretch reads TEKDTETKKKDEV. A compositionally biased stretch (acidic residues) spans 33–46; the sequence is EKDEAMEEKGEEID. Positions 77–91 are enriched in polar residues; the sequence is PRSSGNKPLSITQGR. A compositionally biased stretch (acidic residues) spans 267 to 276; it reads NGEDDVAPEE. Composition is skewed to basic and acidic residues over residues 277-303, 312-322, and 347-360; these read ENNK…TDKK, EKPAAEEEKSI, and QKVD…EKGK. The Nuclear localization signal motif lies at 344-351; that stretch reads SKKQKVDK. Residues 384-439 form the DEK-C domain; sequence EPTRKELHVVVTKILKEVDFNTATLSDILRKLGSHFGIDLMHRKAEVKDIITDAIN. DNA-binding regions lie at residues 402 to 416 and 431 to 435; these read DFNT…RKLG and KDIIT. The interval 438-462 is disordered; it reads INEMSDDDDEKEEDTEDEGEKEGKD. Over residues 441–462 the composition is skewed to acidic residues; it reads MSDDDDEKEEDTEDEGEKEGKD.

As to quaternary structure, found in a mRNA splicing-dependent exon junction complex (EJC). Binds specifically histones H3 and H4.

The protein localises to the nucleus. It is found in the nucleolus. Chromatin-associated protein which contributes to the modulation of chromatin structure (such as super-helical structure of DNA) and function. Binds to chromatin of protein-coding genes throughout the genome to regulate nucleosome occupancy and chromatin accessibility, and to modulate the expression of target genes. The protein is DEK domain-containing chromatin-associated protein 1 of Arabidopsis thaliana (Mouse-ear cress).